A 919-amino-acid polypeptide reads, in one-letter code: UPF0182 protein Tery_4385 (919 aa).

Transmembrane regions (helical) follow at residues 6-26 (YIII…RTLV), 52-72 (IFLW…NYWI), 96-116 (IFVK…AATA), 160-180 (WLFT…ALKG), 198-218 (THIS…FWFE), 243-263 (FAYW…VLSV), and 268-288 (IIWP…FNVL).

This sequence belongs to the UPF0182 family.

Its subcellular location is the cell membrane. The sequence is that of UPF0182 protein Tery_4385 from Trichodesmium erythraeum (strain IMS101).